A 1315-amino-acid polypeptide reads, in one-letter code: Claspin (1315 aa).

Disordered regions lie at residues 22–276 (EAAD…AARL) and 345–474 (PADA…EQKT). A phosphoserine mark is found at serine 26, serine 42, serine 46, serine 53, serine 65, and serine 67. Over residues 65–74 (SDSEAEDRDD) the composition is skewed to acidic residues. Polar residues predominate over residues 91–101 (NLHSGKSQSRS). Residues 108–118 (DSDESDMEETP) are compositionally biased toward acidic residues. Residues serine 109, serine 112, and serine 119 each carry the phosphoserine modification. Polar residues predominate over residues 119–128 (SQESPETQEA). 2 stretches are compositionally biased toward basic and acidic residues: residues 153 to 178 (LLRE…MEKI) and 186 to 197 (TRCEESDADRPL). The stretch at 159–187 (EGKAKSKRRLEKEERTMEKIRRLKKKETR) forms a coiled coil. Residues 205–228 (EDSDLFETGLEEENDSALEDEESL) are compositionally biased toward acidic residues. Phosphoserine is present on serine 220. The span at 235–245 (VKNKVKNRKKK) shows a compositional bias: basic residues. Serine 255 bears the Phosphoserine mark. Basic and acidic residues-rich tracts occupy residues 391–415 (ACGK…DDRP) and 455–470 (EELK…EGMP). Serine 522 is modified (phosphoserine). The stretch at 599–626 (EKLQMLKAKLQEAMKLRRLEERQKRQAL) forms a coiled coil. A disordered region spans residues 625–691 (ALFKLDNEDG…SSDIGKSVAL (67 aa)). Residues 632–657 (EDGFEEEEEEEEMTDESEEDGEEETT) are compositionally biased toward acidic residues. The segment covering 669 to 679 (KDEKETDKENT) has biased composition (basic and acidic residues). Serine 698, serine 701, serine 709, serine 722, and serine 740 each carry phosphoserine. The interval 713–750 (MGYFPTEEKSETDEYLAKQSDKLDEDDSSSLLTKESSH) is disordered. Low complexity predominate over residues 741 to 750 (SSLLTKESSH). 5 positions are modified to phosphoserine: serine 785, serine 787, serine 810, serine 816, and serine 823. Lysine 868 is subject to N6-acetyllysine. CKB motif repeat units follow at residues 887-896 (ELLDLCTGQF) and 917-926 (ELLNLCSGKF). At threonine 893 the chain carries Phosphothreonine; by CHEK1. Disordered stretches follow at residues 924–1002 (GKFP…NDEE) and 1032–1052 (EDEA…DGEE). Phosphoserine is present on serine 932. The CKB motif 3 repeat unit spans residues 954-963 (EALALCSGSF). Residues 966 to 1063 (DREEEGEEEE…DEYEEDVIDE (98 aa)) are acidic patch. 3 stretches are compositionally biased toward acidic residues: residues 967–977 (REEEGEEEEFG), 990–1002 (SDED…NDEE), and 1043–1052 (GSEDEYDGEE). Serine 990, serine 996, and serine 998 each carry phosphoserine. A coiled-coil region spans residues 1001–1036 (EELALDLEDDEEELLKQSEKMKRQMRLKKYLEDEAE). Phosphoserine occurs at positions 1133 and 1265. Positions 1264–1315 (LSPTKAEAAKDSSKPQVRRRGLSSMMSPSPKRLKTNGSSPGPKRSIFRYLES) are disordered.

The protein belongs to the claspin family. As to quaternary structure, interacts (phosphorylation-dependent) with CHEK1; regulates CLSPN function in checkpoint for DNA damage and replication. Interacts with ATR and RAD9A and these interactions are slightly reduced during checkpoint activation. Interacts with BRCA1 and this interaction increases during checkpoint activation. Interacts with TIMELESS; the interaction is required for leading-strand replication. Associates with the MCM2-7 complex and other replisome factors. Interacts (via the acidic patch) with CDC7; the interaction is required for phosphorylation of MCM proteins and CLASPIN by CDC7. Interacts with PCNA. Interacts with FZR1. Phosphorylated. Undergoes ATR-dependent phosphorylation by CHEK1 during activation of DNA replication or damage checkpoints. Phosphorylation by CSNK1G1/CK1 promotes CHEK1 binding. Phosphorylated by CDC7 during DNA replication, phosphorylation inhibits interaction between the acidic patch and N-terminal segments leading to increased binding to DNA and PCNA. Post-translationally, ubiquitinated by the anaphase promoting complex/cyclosome (APC/C) during G1 phase, leading to its degradation by the proteasome. Ubiquitination is mediated via its interaction with FZR1/CDH1. Following DNA damage, it is deubiquitinated by USP28 in G2 phase, preventing its degradation. In terms of processing, proteolytically cleaved by caspase-7 (CASP7) in response to apoptosis, leading to its inactivation.

It localises to the nucleus. Functionally, required for checkpoint mediated cell cycle arrest in response to inhibition of DNA replication or to DNA damage induced by both ionizing and UV irradiation. Adapter protein which binds to BRCA1 and the checkpoint kinase CHEK1 and facilitates the ATR-dependent phosphorylation of both proteins. Also required to maintain normal rates of replication fork progression during unperturbed DNA replication. Binds directly to DNA, with particular affinity for branched or forked molecules and interacts with multiple protein components of the replisome such as the MCM2-7 complex and TIMELESS. Important for initiation of DNA replication, recruits kinase CDC7 to phosphorylate MCM2-7 components. This chain is Claspin (Clspn), found in Mus musculus (Mouse).